We begin with the raw amino-acid sequence, 192 residues long: ER membrane protein complex subunit 8/9 homolog (192 aa).

The MPN domain maps to 5-135 (ISITTEALSK…LVSIDKVGSD (131 aa)).

Belongs to the EMC8/EMC9 family.

The chain is ER membrane protein complex subunit 8/9 homolog from Dictyostelium discoideum (Social amoeba).